The primary structure comprises 226 residues: Thymidylate kinase (226 aa).

20–27 (GGEGAGKS) is a binding site for ATP.

The protein belongs to the thymidylate kinase family.

The catalysed reaction is dTMP + ATP = dTDP + ADP. Functionally, phosphorylation of dTMP to form dTDP in both de novo and salvage pathways of dTTP synthesis. The sequence is that of Thymidylate kinase from Bradyrhizobium sp. (strain BTAi1 / ATCC BAA-1182).